Reading from the N-terminus, the 63-residue chain is MANPKAKMSKSRRDKRRAQFNARTKPVTTVNCPNCGEPTLPHRACRHCGHYRGRAVTGKTANG.

The tract at residues 1–27 (MANPKAKMSKSRRDKRRAQFNARTKPV) is disordered. Positions 7-18 (KMSKSRRDKRRA) are enriched in basic residues.

It belongs to the bacterial ribosomal protein bL32 family.

The protein is Large ribosomal subunit protein bL32 of Chlorobium phaeobacteroides (strain DSM 266 / SMG 266 / 2430).